The primary structure comprises 485 residues: Probable L-xylulose kinase (485 aa).

This sequence belongs to the FGGY kinase family. As to quaternary structure, homodimer.

It carries out the reaction L-xylulose + ATP = L-xylulose 5-phosphate + ADP + H(+). The polypeptide is Probable L-xylulose kinase (lyx) (Haemophilus influenzae (strain ATCC 51907 / DSM 11121 / KW20 / Rd)).